Reading from the N-terminus, the 121-residue chain is Large ribosomal subunit protein uL18 (121 aa).

The protein belongs to the universal ribosomal protein uL18 family. Part of the 50S ribosomal subunit; part of the 5S rRNA/L5/L18/L25 subcomplex. Contacts the 5S and 23S rRNAs.

This is one of the proteins that bind and probably mediate the attachment of the 5S RNA into the large ribosomal subunit, where it forms part of the central protuberance. The polypeptide is Large ribosomal subunit protein uL18 (Streptococcus thermophilus (strain CNRZ 1066)).